A 189-amino-acid chain; its full sequence is 6,7-dimethyl-8-ribityllumazine synthase (189 aa).

Residues W31, 65–67 (SFE), and 89–91 (CVI) contribute to the 5-amino-6-(D-ribitylamino)uracil site. 94-95 (ET) is a (2S)-2-hydroxy-3-oxobutyl phosphate binding site. The active-site Proton donor is the H97. F122 is a 5-amino-6-(D-ribitylamino)uracil binding site. R136 contributes to the (2S)-2-hydroxy-3-oxobutyl phosphate binding site.

This sequence belongs to the DMRL synthase family.

It catalyses the reaction (2S)-2-hydroxy-3-oxobutyl phosphate + 5-amino-6-(D-ribitylamino)uracil = 6,7-dimethyl-8-(1-D-ribityl)lumazine + phosphate + 2 H2O + H(+). Its pathway is cofactor biosynthesis; riboflavin biosynthesis; riboflavin from 2-hydroxy-3-oxobutyl phosphate and 5-amino-6-(D-ribitylamino)uracil: step 1/2. Catalyzes the formation of 6,7-dimethyl-8-ribityllumazine by condensation of 5-amino-6-(D-ribitylamino)uracil with 3,4-dihydroxy-2-butanone 4-phosphate. This is the penultimate step in the biosynthesis of riboflavin. This is 6,7-dimethyl-8-ribityllumazine synthase from Flavobacterium psychrophilum (strain ATCC 49511 / DSM 21280 / CIP 103535 / JIP02/86).